Here is a 486-residue protein sequence, read N- to C-terminus: Ribulose bisphosphate carboxylase large chain 3 (486 aa).

Asn125 and Thr175 together coordinate substrate. Lys177 serves as the catalytic Proton acceptor. Residue Lys179 participates in substrate binding. The Mg(2+) site is built by Lys203, Asp205, and Glu206. Lys203 carries the post-translational modification N6-carboxylysine. His295 acts as the Proton acceptor in catalysis. Positions 296, 328, and 380 each coordinate substrate.

The protein belongs to the RuBisCO large chain family. Type I subfamily. As to quaternary structure, heterohexadecamer of 8 large chains and 8 small chains. Requires Mg(2+) as cofactor.

The catalysed reaction is 2 (2R)-3-phosphoglycerate + 2 H(+) = D-ribulose 1,5-bisphosphate + CO2 + H2O. It carries out the reaction D-ribulose 1,5-bisphosphate + O2 = 2-phosphoglycolate + (2R)-3-phosphoglycerate + 2 H(+). Functionally, ruBisCO catalyzes two reactions: the carboxylation of D-ribulose 1,5-bisphosphate, the primary event in carbon dioxide fixation, as well as the oxidative fragmentation of the pentose substrate. Both reactions occur simultaneously and in competition at the same active site. This chain is Ribulose bisphosphate carboxylase large chain 3, found in Bradyrhizobium sp. (strain BTAi1 / ATCC BAA-1182).